Consider the following 181-residue polypeptide: MSSVIASRRYAYAFLSAAEAGGFLETVTGEMQMVGETLAASRDLQRALASPLINADRKTHLLEEIFAEAVGDKMMLFLRLIAHKKRAGILGGITQEFAALLDEKNGIVNAAVTSATELSDSQQKALSRSLEGYTGKKVRSAMKIDESLIGGLSVKIGDTIFDGSVRHQLQLLREKLVAVEA.

Belongs to the ATPase delta chain family. As to quaternary structure, F-type ATPases have 2 components, F(1) - the catalytic core - and F(0) - the membrane proton channel. F(1) has five subunits: alpha(3), beta(3), gamma(1), delta(1), epsilon(1). F(0) has three main subunits: a(1), b(2) and c(10-14). The alpha and beta chains form an alternating ring which encloses part of the gamma chain. F(1) is attached to F(0) by a central stalk formed by the gamma and epsilon chains, while a peripheral stalk is formed by the delta and b chains.

Its subcellular location is the cell inner membrane. Functionally, f(1)F(0) ATP synthase produces ATP from ADP in the presence of a proton or sodium gradient. F-type ATPases consist of two structural domains, F(1) containing the extramembraneous catalytic core and F(0) containing the membrane proton channel, linked together by a central stalk and a peripheral stalk. During catalysis, ATP synthesis in the catalytic domain of F(1) is coupled via a rotary mechanism of the central stalk subunits to proton translocation. Its function is as follows. This protein is part of the stalk that links CF(0) to CF(1). It either transmits conformational changes from CF(0) to CF(1) or is implicated in proton conduction. This chain is ATP synthase subunit delta, found in Chlorobium phaeovibrioides (strain DSM 265 / 1930) (Prosthecochloris vibrioformis (strain DSM 265)).